We begin with the raw amino-acid sequence, 418 residues long: Gamma-glutamyl phosphate reductase (418 aa).

This sequence belongs to the gamma-glutamyl phosphate reductase family.

The protein localises to the cytoplasm. The enzyme catalyses L-glutamate 5-semialdehyde + phosphate + NADP(+) = L-glutamyl 5-phosphate + NADPH + H(+). The protein operates within amino-acid biosynthesis; L-proline biosynthesis; L-glutamate 5-semialdehyde from L-glutamate: step 2/2. Catalyzes the NADPH-dependent reduction of L-glutamate 5-phosphate into L-glutamate 5-semialdehyde and phosphate. The product spontaneously undergoes cyclization to form 1-pyrroline-5-carboxylate. The protein is Gamma-glutamyl phosphate reductase of Lacticaseibacillus casei (strain BL23) (Lactobacillus casei).